A 103-amino-acid polypeptide reads, in one-letter code: MVSLTSYAFVSMMLFSIGAIGVIARKNIFVIYMSIEMMLNGINLFLITFARYHFNIDPQIITVMVISIAAAEAAIFLSVIILLFRSKKSLNTDVFTSLTQGEN.

3 helical membrane-spanning segments follow: residues 4–24 (LTSY…GVIA), 28–48 (IFVI…FLIT), and 64–84 (MVIS…ILLF).

It belongs to the complex I subunit 4L family. In terms of assembly, NDH-1 is composed of 14 different subunits. Subunits NuoA, H, J, K, L, M, N constitute the membrane sector of the complex.

It localises to the cell inner membrane. The enzyme catalyses a quinone + NADH + 5 H(+)(in) = a quinol + NAD(+) + 4 H(+)(out). NDH-1 shuttles electrons from NADH, via FMN and iron-sulfur (Fe-S) centers, to quinones in the respiratory chain. The immediate electron acceptor for the enzyme in this species is believed to be ubiquinone. Couples the redox reaction to proton translocation (for every two electrons transferred, four hydrogen ions are translocated across the cytoplasmic membrane), and thus conserves the redox energy in a proton gradient. The polypeptide is NADH-quinone oxidoreductase subunit K (Aliarcobacter butzleri (strain RM4018) (Arcobacter butzleri)).